Reading from the N-terminus, the 185-residue chain is N-alpha-acetyltransferase 30 (185 aa).

The N-acetyltransferase domain maps to 31–179 (IEYIPYQGES…DAVRLLLPLN (149 aa)).

The protein belongs to the acetyltransferase family. MAK3 subfamily.

In terms of biological role, probable catalytic component of a complex displaying alpha (N-terminal) acetyltransferase activity. The chain is N-alpha-acetyltransferase 30 from Dictyostelium discoideum (Social amoeba).